An 801-amino-acid chain; its full sequence is Probable methionine--tRNA ligase (801 aa).

The 'HIGH' region motif lies at Pro-25–Asn-35. Residues Lys-347–Ser-351 carry the 'KMSKS' region motif. An ATP-binding site is contributed by Lys-350. Residues Asp-606–Asn-633 form a disordered region. Residues Thr-639–Thr-742 form the tRNA-binding domain.

The protein belongs to the class-I aminoacyl-tRNA synthetase family.

The protein localises to the cytoplasm. It carries out the reaction tRNA(Met) + L-methionine + ATP = L-methionyl-tRNA(Met) + AMP + diphosphate. This is Probable methionine--tRNA ligase from Oryza sativa subsp. japonica (Rice).